Here is a 358-residue protein sequence, read N- to C-terminus: MSVCYRPPGNETLLSWKTSRATGTAFLLLAALLGLPGNGFVVWSLAGWRPARGRPLAATLVLHLALADGAVLLLTPLFVAFLTRQAWPLGQAGCKAVYYVCALSMYASVLLTGLLSLQRCLAVTRPFLAPRLRSPALARRLLLAVWLAALLLAVPAAVYRHLWRDRVCQLCHPSPVHAAAHLSLETLTAFVLPFGLMLGCYSVTLARLRGARWGSGRHGARVGRLVSAIVLAFGLLWAPYHAVNLLQAVAALAPPEGALAKLGGAGQAARAGTTALAFFSSSVNPVLYVFTAGDLLPRAGPRFLTRLFEGSGEARGGGRSREGTMELRTTPQLKVVGQGRGNGDPGGGMEKDGPEWDL.

The Extracellular portion of the chain corresponds to methionine 1–threonine 24. Residue asparagine 10 is glycosylated (N-linked (GlcNAc...) asparagine). The helical transmembrane segment at alanine 25 to leucine 45 threads the bilayer. At alanine 46–leucine 60 the chain is on the cytoplasmic side. Residues valine 61–phenylalanine 81 form a helical membrane-spanning segment. Over leucine 82–alanine 96 the chain is Extracellular. The helical transmembrane segment at valine 97–leucine 117 threads the bilayer. Residues glutamine 118–arginine 140 are Cytoplasmic-facing. Residues leucine 141–histidine 161 traverse the membrane as a helical segment. Residues leucine 162–glutamate 185 lie on the Extracellular side of the membrane. Residues threonine 186–alanine 206 traverse the membrane as a helical segment. Residues arginine 207–arginine 224 lie on the Cytoplasmic side of the membrane. Residues leucine 225 to leucine 245 traverse the membrane as a helical segment. Residues leucine 246–alanine 275 lie on the Extracellular side of the membrane. The chain crosses the membrane as a helical span at residues leucine 276–leucine 296. At proline 297 to leucine 358 the chain is on the cytoplasmic side. Positions serine 311–leucine 358 are disordered. Over residues glutamine 338–glycine 348 the composition is skewed to gly residues. Residues methionine 349 to leucine 358 show a composition bias toward basic and acidic residues.

This sequence belongs to the G-protein coupled receptor 1 family. In terms of tissue distribution, widely expressed.

It is found in the cell membrane. Functionally, low-affinity receptor for leukotrienes including leukotriene B4. Mediates chemotaxis of granulocytes and macrophages. The response is mediated via G-proteins that activate a phosphatidylinositol-calcium second messenger system. The rank order of affinities for the leukotrienes is LTB4 &gt; 12-epi-LTB4 &gt; LTB5 &gt; LTB3. This Homo sapiens (Human) protein is Leukotriene B4 receptor 2 (LTB4R2).